A 562-amino-acid polypeptide reads, in one-letter code: NAD-dependent malic enzyme (562 aa).

Tyrosine 101 serves as the catalytic Proton donor. Arginine 154 serves as a coordination point for NAD(+). Lysine 172 functions as the Proton acceptor in the catalytic mechanism. Residues glutamate 243, aspartate 244, and aspartate 267 each contribute to the a divalent metal cation site. NAD(+) contacts are provided by aspartate 267 and asparagine 415.

It belongs to the malic enzymes family. In terms of assembly, homotetramer. Mg(2+) is required as a cofactor. The cofactor is Mn(2+).

It catalyses the reaction (S)-malate + NAD(+) = pyruvate + CO2 + NADH. The enzyme catalyses oxaloacetate + H(+) = pyruvate + CO2. The chain is NAD-dependent malic enzyme from Shewanella woodyi (strain ATCC 51908 / MS32).